Here is a 160-residue protein sequence, read N- to C-terminus: uncharacterized protein (160 aa).

The RING-type zinc-finger motif lies at 8-46 (CAVCLDFFVEPCIIECGHSYCRFCIESHLNINEKCPLCR).

This is an uncharacterized protein from Caenorhabditis elegans.